Here is a 124-residue protein sequence, read N- to C-terminus: UPF0235 protein (124 aa).

Positions 1 to 22 (MTKKGSSNSSKQQQQQQQIIIN) are disordered.

The protein belongs to the UPF0235 family.

In Dictyostelium discoideum (Social amoeba), this protein is UPF0235 protein.